We begin with the raw amino-acid sequence, 198 residues long: A-type ATP synthase subunit E (198 aa).

This sequence belongs to the V-ATPase E subunit family. Has multiple subunits with at least A(3), B(3), C, D, E, F, H, I and proteolipid K(x).

It localises to the cell membrane. Component of the A-type ATP synthase that produces ATP from ADP in the presence of a proton gradient across the membrane. This chain is A-type ATP synthase subunit E, found in Pyrococcus furiosus (strain ATCC 43587 / DSM 3638 / JCM 8422 / Vc1).